The primary structure comprises 141 residues: Nucleoside diphosphate kinase (141 aa).

Lysine 11, phenylalanine 59, arginine 87, threonine 93, arginine 104, and asparagine 114 together coordinate ATP. Histidine 117 serves as the catalytic Pros-phosphohistidine intermediate.

The protein belongs to the NDK family. In terms of assembly, homotetramer. The cofactor is Mg(2+).

It is found in the cytoplasm. The catalysed reaction is a 2'-deoxyribonucleoside 5'-diphosphate + ATP = a 2'-deoxyribonucleoside 5'-triphosphate + ADP. It carries out the reaction a ribonucleoside 5'-diphosphate + ATP = a ribonucleoside 5'-triphosphate + ADP. In terms of biological role, major role in the synthesis of nucleoside triphosphates other than ATP. The ATP gamma phosphate is transferred to the NDP beta phosphate via a ping-pong mechanism, using a phosphorylated active-site intermediate. The polypeptide is Nucleoside diphosphate kinase (Histophilus somni (strain 129Pt) (Haemophilus somnus)).